We begin with the raw amino-acid sequence, 375 residues long: tRNA-specific 2-thiouridylase MnmA (375 aa).

ATP-binding positions include 12–19 and M38; that span reads GMSGGVDS. The interval 98-100 is interaction with target base in tRNA; that stretch reads NPD. Residue C103 is the Nucleophile of the active site. Residues C103 and C200 are joined by a disulfide bond. G127 provides a ligand contact to ATP. An interaction with tRNA region spans residues 150–152; the sequence is KDQ. Residue C200 is the Cysteine persulfide intermediate of the active site. Residues 312 to 313 are interaction with tRNA; the sequence is RY.

This sequence belongs to the MnmA/TRMU family.

The protein resides in the cytoplasm. It carries out the reaction S-sulfanyl-L-cysteinyl-[protein] + uridine(34) in tRNA + AH2 + ATP = 2-thiouridine(34) in tRNA + L-cysteinyl-[protein] + A + AMP + diphosphate + H(+). Functionally, catalyzes the 2-thiolation of uridine at the wobble position (U34) of tRNA, leading to the formation of s(2)U34. The protein is tRNA-specific 2-thiouridylase MnmA of Lactobacillus johnsonii (strain CNCM I-12250 / La1 / NCC 533).